The primary structure comprises 603 residues: Mono(2-hydroxyethyl) terephthalate hydrolase (603 aa).

Positions 1 to 17 (MQTTVTTMLLASVALAA) are cleaved as a signal peptide. A lipid anchor (N-palmitoyl cysteine) is attached at Cys-18. Residue Cys-18 is the site of S-diacylglycerol cysteine attachment. The disordered stretch occupies residues 24-44 (TPLPLPQQQPPQQEPPPPPVP). Residues 26 to 44 (LPLPQQQPPQQEPPPPPVP) are compositionally biased toward pro residues. Cys-51 and Cys-92 are disulfide-bonded. 4-[(2-hydroxyethoxy)carbonyl]benzoate is bound at residue Gly-132. Disulfide bonds link Cys-224–Cys-529, Cys-303–Cys-320, Cys-340–Cys-348, and Cys-577–Cys-599. The active-site Acyl-ester intermediate is Ser-225. Residue Glu-226 participates in 4-[(2-hydroxyethoxy)carbonyl]benzoate binding. Residues Asp-304, Asp-307, Leu-309, Asp-311, and Ile-313 each contribute to the Ca(2+) site. 4-[(2-hydroxyethoxy)carbonyl]benzoate is bound by residues Arg-411 and Ser-416. Residues Asp-492 and His-528 each act as charge relay system in the active site. His-528 provides a ligand contact to 4-[(2-hydroxyethoxy)carbonyl]benzoate.

Belongs to the tannase family.

Its subcellular location is the cell outer membrane. The catalysed reaction is 4-[(2-hydroxyethoxy)carbonyl]benzoate + H2O = terephthalate + ethylene glycol + H(+). In terms of biological role, involved in the degradation and assimilation of the plastic poly(ethylene terephthalate) (PET), which allows I.sakaiensis to use PET as its major energy and carbon source for growth. Likely acts synergistically with PETase to depolymerize PET. Catalyzes the hydrolysis of mono(2-hydroxyethyl) terephthalate (MHET) into its two environmentally benign monomers, terephthalate and ethylene glycol. Does not show activity against PET, bis(hydroxyethyl) terephthalate (BHET), pNP-aliphatic esters or typical aromatic ester compounds catalyzed by the tannase family enzymes, such as ethyl gallate and ethyl ferulate. The chain is Mono(2-hydroxyethyl) terephthalate hydrolase from Piscinibacter sakaiensis (Ideonella sakaiensis).